The chain runs to 433 residues: uncharacterized protein (433 aa).

Positions 258–304 (KNIKSKLLLELRQLKNNITNLQNKITKTMDNVKKIIEEIEQSKNKVT) form a coiled coil.

This sequence belongs to the mimivirus R160 family.

Its subcellular location is the virion. This is an uncharacterized protein from Acanthamoeba polyphaga mimivirus (APMV).